We begin with the raw amino-acid sequence, 221 residues long: Deoxyribose-phosphate aldolase (221 aa).

The active-site Proton donor/acceptor is the Asp-89. The Schiff-base intermediate with acetaldehyde role is filled by Lys-151. Lys-180 serves as the catalytic Proton donor/acceptor.

This sequence belongs to the DeoC/FbaB aldolase family. DeoC type 1 subfamily.

The protein resides in the cytoplasm. It carries out the reaction 2-deoxy-D-ribose 5-phosphate = D-glyceraldehyde 3-phosphate + acetaldehyde. Its pathway is carbohydrate degradation; 2-deoxy-D-ribose 1-phosphate degradation; D-glyceraldehyde 3-phosphate and acetaldehyde from 2-deoxy-alpha-D-ribose 1-phosphate: step 2/2. Its function is as follows. Catalyzes a reversible aldol reaction between acetaldehyde and D-glyceraldehyde 3-phosphate to generate 2-deoxy-D-ribose 5-phosphate. The chain is Deoxyribose-phosphate aldolase from Mesomycoplasma hyopneumoniae (strain J / ATCC 25934 / NCTC 10110) (Mycoplasma hyopneumoniae).